A 416-amino-acid polypeptide reads, in one-letter code: Glutamyl-tRNA reductase (416 aa).

Residues 49–52 (TCNR), serine 105, 110–112 (EPQ), and glutamine 116 each bind substrate. Catalysis depends on cysteine 50, which acts as the Nucleophile. Residue 185 to 190 (GAGETI) participates in NADP(+) binding.

This sequence belongs to the glutamyl-tRNA reductase family. Homodimer.

It catalyses the reaction (S)-4-amino-5-oxopentanoate + tRNA(Glu) + NADP(+) = L-glutamyl-tRNA(Glu) + NADPH + H(+). Its pathway is porphyrin-containing compound metabolism; protoporphyrin-IX biosynthesis; 5-aminolevulinate from L-glutamyl-tRNA(Glu): step 1/2. In terms of biological role, catalyzes the NADPH-dependent reduction of glutamyl-tRNA(Glu) to glutamate 1-semialdehyde (GSA). The polypeptide is Glutamyl-tRNA reductase (Shewanella oneidensis (strain ATCC 700550 / JCM 31522 / CIP 106686 / LMG 19005 / NCIMB 14063 / MR-1)).